The chain runs to 203 residues: Probable nicotinate-nucleotide adenylyltransferase (203 aa).

Belongs to the NadD family.

The catalysed reaction is nicotinate beta-D-ribonucleotide + ATP + H(+) = deamido-NAD(+) + diphosphate. The protein operates within cofactor biosynthesis; NAD(+) biosynthesis; deamido-NAD(+) from nicotinate D-ribonucleotide: step 1/1. Functionally, catalyzes the reversible adenylation of nicotinate mononucleotide (NaMN) to nicotinic acid adenine dinucleotide (NaAD). In Dictyoglomus turgidum (strain DSM 6724 / Z-1310), this protein is Probable nicotinate-nucleotide adenylyltransferase.